Consider the following 466-residue polypeptide: Ribulose bisphosphate carboxylase/oxygenase activase, chloroplastic (466 aa).

The N-terminal 48 residues, 1 to 48, are a transit peptide targeting the chloroplast; that stretch reads MAAAFSSTVGAPASTPTNFLGKKLKKQVTSAVNYHGKSSNINRFKVMA. 156-163 lines the ATP pocket; that stretch reads GGKGQGKS. The disordered stretch occupies residues 429 to 454; the sequence is QGAQQAGNLPVPEGCTDPVAKNFDPT.

It belongs to the RuBisCO activase family.

The protein resides in the plastid. It is found in the chloroplast stroma. Activation of RuBisCO (ribulose-1,5-bisphosphate carboxylase/oxygenase; EC 4.1.1.39) involves the ATP-dependent carboxylation of the epsilon-amino group of lysine leading to a carbamate structure. The polypeptide is Ribulose bisphosphate carboxylase/oxygenase activase, chloroplastic (RCA) (Oryza sativa subsp. japonica (Rice)).